The primary structure comprises 480 residues: UDP-N-acetylmuramate--L-alanine ligase (480 aa).

ATP is bound at residue 129-135 (GSHGKTT).

It belongs to the MurCDEF family.

It localises to the cytoplasm. The enzyme catalyses UDP-N-acetyl-alpha-D-muramate + L-alanine + ATP = UDP-N-acetyl-alpha-D-muramoyl-L-alanine + ADP + phosphate + H(+). The protein operates within cell wall biogenesis; peptidoglycan biosynthesis. Cell wall formation. This Syntrophus aciditrophicus (strain SB) protein is UDP-N-acetylmuramate--L-alanine ligase.